A 255-amino-acid polypeptide reads, in one-letter code: Short chain dehydrogenase adrF (255 aa).

The NADP(+) site is built by Ile11, Arg118, Tyr150, Lys154, and Val183. The active-site Proton acceptor is the Tyr150. Catalysis depends on Lys154, which acts as the Lowers pKa of active site Tyr.

Belongs to the short-chain dehydrogenases/reductases (SDR) family.

Its pathway is secondary metabolite biosynthesis; terpenoid biosynthesis. Its function is as follows. Short chain dehydrogenase; part of the gene cluster that mediates the biosynthesis of andrastins, meroterpenoid compounds that exhibit inhibitory activity against ras farnesyltransferase, suggesting that they could be promising leads for antitumor agents. The first step of the pathway is the synthesis of 3,5-dimethylorsellinic acid (DMOA) by the polyketide synthase adrD via condensation of one acetyl-CoA starter unit with 3 malonyl-CoA units and 2 methylations. DMAO is then converted to farnesyl-DMAO by the prenyltransferase adrG. The methyltransferase adrK catalyzes the methylation of the carboxyl group of farnesyl-DMAO to farnesyl-DMAO methyl ester which is further converted to epoxyfarnesyl-DMAO methyl ester by the FAD-dependent monooxygenase adrH. The terpene cyclase adrI then catalyzes the carbon skeletal rearrangement to generate the andrastin E, the first compound in the pathway having the andrastin scaffold, with the tetracyclic ring system. The post-cyclization tailoring enzymes adrF, adrE, adrJ, and adrA, are involved in the conversion of andrastin E into andrastin A. The short chain dehydrogenase adrF is responsible for the oxidation of the C-3 a hydroxyl group of andrastin E to yield the corresponding ketone, andrastin D. The ketoreductase adrE stereoselectively reduces the carbonyl moiety to reverse the stereochemistry of the C-3 position to yield andrastin F. The acetyltransferase adrJ is the acetyltransferase that attaches the acetyl group to the C-3 hydroxyl group of andrastin F to yield andrastin C. Finally, the cytochrome P450 monooxygenase adrA catalyzes two sequential oxidation reactions of the C-23 methyl group, to generate the corresponding alcohol andrastin B, and aldehyde andrastin A. This Penicillium rubens (strain ATCC 28089 / DSM 1075 / NRRL 1951 / Wisconsin 54-1255) (Penicillium chrysogenum) protein is Short chain dehydrogenase adrF.